We begin with the raw amino-acid sequence, 181 residues long: Adenylate kinase (181 aa).

Residue G10–T15 coordinates ATP. The interval S30 to V59 is NMP. AMP contacts are provided by residues T31, R36, D57–V59, G85–R88, and Q92. The LID stretch occupies residues A126 to D132. R127 is a binding site for ATP. AMP-binding residues include R129 and R140. Residue G166 participates in ATP binding.

It belongs to the adenylate kinase family. As to quaternary structure, monomer.

The protein localises to the cytoplasm. It carries out the reaction AMP + ATP = 2 ADP. It functions in the pathway purine metabolism; AMP biosynthesis via salvage pathway; AMP from ADP: step 1/1. Functionally, catalyzes the reversible transfer of the terminal phosphate group between ATP and AMP. Plays an important role in cellular energy homeostasis and in adenine nucleotide metabolism. This is Adenylate kinase from Mycolicibacterium paratuberculosis (strain ATCC BAA-968 / K-10) (Mycobacterium paratuberculosis).